We begin with the raw amino-acid sequence, 419 residues long: Serine hydroxymethyltransferase (419 aa).

(6S)-5,6,7,8-tetrahydrofolate is bound by residues Leu120 and 124–126 (GHL). Lys229 is modified (N6-(pyridoxal phosphate)lysine).

Belongs to the SHMT family. Homodimer. It depends on pyridoxal 5'-phosphate as a cofactor.

It is found in the cytoplasm. The catalysed reaction is (6R)-5,10-methylene-5,6,7,8-tetrahydrofolate + glycine + H2O = (6S)-5,6,7,8-tetrahydrofolate + L-serine. Its pathway is one-carbon metabolism; tetrahydrofolate interconversion. It participates in amino-acid biosynthesis; glycine biosynthesis; glycine from L-serine: step 1/1. Its function is as follows. Catalyzes the reversible interconversion of serine and glycine with tetrahydrofolate (THF) serving as the one-carbon carrier. This reaction serves as the major source of one-carbon groups required for the biosynthesis of purines, thymidylate, methionine, and other important biomolecules. Also exhibits THF-independent aldolase activity toward beta-hydroxyamino acids, producing glycine and aldehydes, via a retro-aldol mechanism. The protein is Serine hydroxymethyltransferase of Herpetosiphon aurantiacus (strain ATCC 23779 / DSM 785 / 114-95).